A 209-amino-acid polypeptide reads, in one-letter code: D-aminoacyl-tRNA deacylase 1 (209 aa).

Mg(2+) contacts are provided by Val4, Gln6, and Cys28. Positions 139–140 (GP) match the Gly-cisPro motif, important for rejection of L-amino acids motif. The interval 142–209 (TIELESPAPG…EGDVSSEREP (68 aa)) is disordered. 2 stretches are compositionally biased toward basic and acidic residues: residues 159–170 (QLSKLEKQQQRK) and 181–194 (SSKE…EDRS). Residues Ser197, Ser204, and Ser205 each carry the phosphoserine modification.

Belongs to the DTD family. As to quaternary structure, homodimer. Interacts with CDC45 and TOPBP1. Preferentially phosphorylated in cells arrested early in S phase. Phosphorylation in the C-terminus weakens the interaction with CDC45. In terms of tissue distribution, expressed in many adult and fetal tissues. Highest levels in testis, ovary, spleen and in adult and fetal brain.

The protein resides in the nucleus. It localises to the cytoplasm. It catalyses the reaction glycyl-tRNA(Ala) + H2O = tRNA(Ala) + glycine + H(+). The catalysed reaction is a D-aminoacyl-tRNA + H2O = a tRNA + a D-alpha-amino acid + H(+). Its function is as follows. Possible ATPase involved in DNA replication, may facilitate loading of CDC45 onto pre-replication complexes. An aminoacyl-tRNA editing enzyme that deacylates mischarged D-aminoacyl-tRNAs. Also deacylates mischarged glycyl-tRNA(Ala), protecting cells against glycine mischarging by AlaRS. Acts via tRNA-based rather than protein-based catalysis; rejects L-amino acids rather than detecting D-amino acids in the active site. By recycling D-aminoacyl-tRNA to D-amino acids and free tRNA molecules, this enzyme counteracts the toxicity associated with the formation of D-aminoacyl-tRNA entities in vivo and helps enforce protein L-homochirality. This is D-aminoacyl-tRNA deacylase 1 (DTD1) from Homo sapiens (Human).